Reading from the N-terminus, the 273-residue chain is 4-hydroxy-tetrahydrodipicolinate reductase (273 aa).

NAD(+) contacts are provided by residues 12 to 17 (GAGGRM) and E38. R39 is a binding site for NADP(+). NAD(+)-binding positions include 102–104 (GTT) and 126–129 (AANF). Catalysis depends on H159, which acts as the Proton donor/acceptor. Position 160 (H160) interacts with (S)-2,3,4,5-tetrahydrodipicolinate. K163 serves as the catalytic Proton donor. 169-170 (GT) contacts (S)-2,3,4,5-tetrahydrodipicolinate.

This sequence belongs to the DapB family. As to quaternary structure, homotetramer.

Its subcellular location is the cytoplasm. The catalysed reaction is (S)-2,3,4,5-tetrahydrodipicolinate + NAD(+) + H2O = (2S,4S)-4-hydroxy-2,3,4,5-tetrahydrodipicolinate + NADH + H(+). It catalyses the reaction (S)-2,3,4,5-tetrahydrodipicolinate + NADP(+) + H2O = (2S,4S)-4-hydroxy-2,3,4,5-tetrahydrodipicolinate + NADPH + H(+). It participates in amino-acid biosynthesis; L-lysine biosynthesis via DAP pathway; (S)-tetrahydrodipicolinate from L-aspartate: step 4/4. Catalyzes the conversion of 4-hydroxy-tetrahydrodipicolinate (HTPA) to tetrahydrodipicolinate. In Salmonella arizonae (strain ATCC BAA-731 / CDC346-86 / RSK2980), this protein is 4-hydroxy-tetrahydrodipicolinate reductase.